We begin with the raw amino-acid sequence, 113 residues long: Large ribosomal subunit protein uL22 (113 aa).

This sequence belongs to the universal ribosomal protein uL22 family. Part of the 50S ribosomal subunit.

Functionally, this protein binds specifically to 23S rRNA; its binding is stimulated by other ribosomal proteins, e.g. L4, L17, and L20. It is important during the early stages of 50S assembly. It makes multiple contacts with different domains of the 23S rRNA in the assembled 50S subunit and ribosome. The globular domain of the protein is located near the polypeptide exit tunnel on the outside of the subunit, while an extended beta-hairpin is found that lines the wall of the exit tunnel in the center of the 70S ribosome. The polypeptide is Large ribosomal subunit protein uL22 (Solibacter usitatus (strain Ellin6076)).